The primary structure comprises 662 residues: DNA ligase (662 aa).

Residues 31 to 35 (DKDYD) and 79 to 80 (SL) each bind NAD(+). Lysine 121 serves as the catalytic N6-AMP-lysine intermediate. Positions 143, 177, and 313 each coordinate NAD(+). Positions 406, 409, 422, and 428 each coordinate Zn(2+). Residues 586-662 (VLESPFMGKT…LSEEEFENMI (77 aa)) form the BRCT domain.

The protein belongs to the NAD-dependent DNA ligase family. LigA subfamily. Mg(2+) serves as cofactor. Requires Mn(2+) as cofactor.

The catalysed reaction is NAD(+) + (deoxyribonucleotide)n-3'-hydroxyl + 5'-phospho-(deoxyribonucleotide)m = (deoxyribonucleotide)n+m + AMP + beta-nicotinamide D-nucleotide.. Functionally, DNA ligase that catalyzes the formation of phosphodiester linkages between 5'-phosphoryl and 3'-hydroxyl groups in double-stranded DNA using NAD as a coenzyme and as the energy source for the reaction. It is essential for DNA replication and repair of damaged DNA. The protein is DNA ligase of Clostridium perfringens (strain ATCC 13124 / DSM 756 / JCM 1290 / NCIMB 6125 / NCTC 8237 / Type A).